The chain runs to 518 residues: 2-isopropylmalate synthase (518 aa).

Residues 5–267 (VIIFDTTLRD…STKIKHKEIY (263 aa)) enclose the Pyruvate carboxyltransferase domain. 4 residues coordinate Mn(2+): Asp14, His202, His204, and Asn238. The interval 392–518 (SLSFFSVQSI…KLKKLKKINN (127 aa)) is regulatory domain.

The protein belongs to the alpha-IPM synthase/homocitrate synthase family. LeuA type 1 subfamily. Homodimer. The cofactor is Mn(2+).

It localises to the cytoplasm. The catalysed reaction is 3-methyl-2-oxobutanoate + acetyl-CoA + H2O = (2S)-2-isopropylmalate + CoA + H(+). It functions in the pathway amino-acid biosynthesis; L-leucine biosynthesis; L-leucine from 3-methyl-2-oxobutanoate: step 1/4. Functionally, catalyzes the condensation of the acetyl group of acetyl-CoA with 3-methyl-2-oxobutanoate (2-ketoisovalerate) to form 3-carboxy-3-hydroxy-4-methylpentanoate (2-isopropylmalate). This Buchnera aphidicola subsp. Rhopalosiphum padi protein is 2-isopropylmalate synthase.